A 257-amino-acid polypeptide reads, in one-letter code: Na(+)-translocating NADH-quinone reductase subunit C (257 aa).

Residues 13-33 (LTVVVLLSLICSLIVASAAVL) traverse the membrane as a helical segment. Thr224 carries the FMN phosphoryl threonine modification.

The protein belongs to the NqrC family. Composed of six subunits; NqrA, NqrB, NqrC, NqrD, NqrE and NqrF. Requires FMN as cofactor.

It is found in the cell inner membrane. The catalysed reaction is a ubiquinone + n Na(+)(in) + NADH + H(+) = a ubiquinol + n Na(+)(out) + NAD(+). Its function is as follows. NQR complex catalyzes the reduction of ubiquinone-1 to ubiquinol by two successive reactions, coupled with the transport of Na(+) ions from the cytoplasm to the periplasm. NqrA to NqrE are probably involved in the second step, the conversion of ubisemiquinone to ubiquinol. The sequence is that of Na(+)-translocating NADH-quinone reductase subunit C from Haemophilus ducreyi (strain 35000HP / ATCC 700724).